The chain runs to 94 residues: Large ribosomal subunit protein bL25 (94 aa).

It belongs to the bacterial ribosomal protein bL25 family. In terms of assembly, part of the 50S ribosomal subunit; part of the 5S rRNA/L5/L18/L25 subcomplex. Contacts the 5S rRNA. Binds to the 5S rRNA independently of L5 and L18.

In terms of biological role, this is one of the proteins that binds to the 5S RNA in the ribosome where it forms part of the central protuberance. This Pectobacterium carotovorum subsp. carotovorum (strain PC1) protein is Large ribosomal subunit protein bL25.